The following is a 345-amino-acid chain: Phosphoribosylformylglycinamidine cyclo-ligase (345 aa).

Belongs to the AIR synthase family.

The protein localises to the cytoplasm. The catalysed reaction is 2-formamido-N(1)-(5-O-phospho-beta-D-ribosyl)acetamidine + ATP = 5-amino-1-(5-phospho-beta-D-ribosyl)imidazole + ADP + phosphate + H(+). It participates in purine metabolism; IMP biosynthesis via de novo pathway; 5-amino-1-(5-phospho-D-ribosyl)imidazole from N(2)-formyl-N(1)-(5-phospho-D-ribosyl)glycinamide: step 2/2. The polypeptide is Phosphoribosylformylglycinamidine cyclo-ligase (Prochlorococcus marinus (strain MIT 9313)).